The following is a 212-amino-acid chain: Ribosomal RNA small subunit methyltransferase G (212 aa).

Residues G80, L85, 131 to 132, and R146 contribute to the S-adenosyl-L-methionine site; that span reads VE.

It belongs to the methyltransferase superfamily. RNA methyltransferase RsmG family.

Its subcellular location is the cytoplasm. The enzyme catalyses guanosine(527) in 16S rRNA + S-adenosyl-L-methionine = N(7)-methylguanosine(527) in 16S rRNA + S-adenosyl-L-homocysteine. Specifically methylates the N7 position of guanine in position 527 of 16S rRNA. The chain is Ribosomal RNA small subunit methyltransferase G from Azoarcus sp. (strain BH72).